Reading from the N-terminus, the 2883-residue chain is Desmoplakin (2883 aa).

Residues 1–21 (MSCNGGSHPRINTLGRMTRAE) are disordered. Residues 1-596 (MSCNGGSHPR…DYMKTIEDLE (596 aa)) form an interaction with PKP1, JUP, PKP2 region. Residues 1–1068 (MSCNGGSHPR…ANSENCNKNK (1068 aa)) form a globular 1 region. Serine 22 bears the Phosphoserine mark. Threonine 59 is modified (phosphothreonine). Serine 65 bears the Phosphoserine mark. Tyrosine 68 is modified (phosphotyrosine). Position 73 is a phosphothreonine (threonine 73). Residues serine 177, serine 178, and serine 188 each carry the phosphoserine modification. Spectrin repeat units lie at residues 190-283 (SGWD…HLRQ) and 284-387 (LQNI…LKEN). Residues 388 to 458 (AAYFQFFEEA…NLVNKSKKIV (71 aa)) form a Spectrin 3a repeat. An SH3 domain is found at 470–527 (NKPIILRALCDYKQDQKIVHKGDECILKDNNERSKWYVTGPGGVDMLVPSVGLIIPPP). Residues 528-557 (NPLAVDLSCKIEQYYEAILALWNQLYINMK) form a Spectrin 3b repeat. 3 Spectrin repeats span residues 558–639 (SLVS…IQLP), 666–781 (VIET…SLCS), and 782–895 (VRAL…DLEK). A coiled-coil region spans residues 1034-1956 (KSLEDLKLKN…LQKEIEKLRQ (923 aa)). Residues 1069–1957 (FLDQNLQKYQ…QKEIEKLRQR (889 aa)) form a central fibrous rod domain region. A phosphoserine mark is found at serine 1670, serine 1720, and serine 2036. Residues 1958-2882 (PYGSHRETQT…YSFSSSSIGG (925 aa)) form a globular 2 region. The 4.5 X 38 AA tandem repeats (Domain A) stretch occupies residues 1972–2220 (TVDSSKLVFD…LLLSVQKRSM (249 aa)). Plectin repeat units follow at residues 2021–2057 (QPFL…PEST), 2058–2095 (VMLL…FDDR), 2096–2133 (QQIY…RETG), 2134–2171 (MRLL…RDLY), 2175–2209 (NDPR…PHTG), 2210–2245 (LLLL…PSTV), 2263–2300 (KDFL…PGTA), 2301–2338 (LELL…IEFK), 2339–2376 (EKLL…KGHG), 2377–2414 (IRLL…EELS), 2418–2452 (SDPS…EETG), 2468–2505 (SQKN…YDTF), 2519–2556 (TITG…RKFF), 2622–2659 (SDPL…SITG), 2660–2697 (QRLL…QDMA), 2736–2773 (QRFL…GRAA), and 2774–2811 (QRLQ…DITG). 3 positions are modified to phosphoserine: serine 2219, serine 2221, and serine 2237. Residues 2256-2458 (DEVGERIKDF…EETGLCLLPL (203 aa)) form a 4.5 X 38 AA tandem repeats (Domain B) region. A lipid anchor (Omega-hydroxyceramide glutamate ester) is attached at glutamine 2492. Residues 2621 to 2833 (LSDPLEESSP…GLPSPYNMSA (213 aa)) form a 4.5 X 38 AA tandem repeats (Domain C) region. Phosphoserine occurs at positions 2822 and 2827. Positions 2822-2883 (SKGLPSPYNM…SFSSSSIGGY (62 aa)) are disordered. A Phosphotyrosine modification is found at tyrosine 2829. 2 positions are modified to phosphoserine: serine 2832 and serine 2836. Residues 2835–2858 (GSRSGSRSGSRSGSRSGSRSGSRR) form a 6 X 4 AA tandem repeats of G-S-R-[SR] region. Low complexity predominate over residues 2835–2858 (GSRSGSRSGSRSGSRSGSRSGSRR). Residues arginine 2837 and arginine 2858 each carry the omega-N-methylarginine modification. Serine 2860 bears the Phosphoserine mark. Threonine 2864 bears the Phosphothreonine mark. A compositionally biased stretch (low complexity) spans 2867–2883 (SSYSYSYSFSSSSIGGY). At serine 2879 the chain carries Phosphoserine.

It belongs to the plakin or cytolinker family. Homodimer. Interacts with COL17A1 (via cytoplasmic region). Interacts with DSC2. Interacts with PKP1. Interacts with PKP2. Interacts weakly with TMEM65. Phosphorylation at Ser-2860 increases association with intermediate filament cytokeratin, potentially facilitating interaction between desmosome junctions and intermediate filament architecture. In terms of tissue distribution, expressed in undifferentiated keratinocytes of the epidermis at birth, expression increases as differentiation proceeds (at protein level). Abundantly expressed in the suprabasal layers and weakly in the basal layers of the outer hair root sheath (at protein level). Expressed at intercalated disks in cardiomyocytes (at protein level).

The protein resides in the cell junction. It localises to the desmosome. Its subcellular location is the cell membrane. The protein localises to the cytoplasm. Its function is as follows. Major high molecular weight protein of desmosomes. Regulates profibrotic gene expression in cardiomyocytes via activation of the MAPK14/p38 MAPK signaling cascade and increase in TGFB1 protein abundance. The chain is Desmoplakin from Mus musculus (Mouse).